Reading from the N-terminus, the 314-residue chain is Lysophospholipase D GDPD1 (314 aa).

Residues 1–3 (MSS) are Extracellular-facing. A helical transmembrane segment spans residues 4–24 (TAAFYLLSTLGGYLVTSFLLL). Residues 25-195 (KYPTLLHQRK…VEKCYKENSD (171 aa)) lie on the Cytoplasmic side of the membrane. Residues 40-309 (SKHISHRGGA…DYPTKLRDFL (270 aa)) form the GP-PDE domain. Residues E72, D74, and H87 each contribute to the a divalent metal cation site. The chain crosses the membrane as a helical span at residues 196–216 (IPILFSLQRVLLILGLFFTGL). The Extracellular portion of the chain corresponds to 217–314 (LPFVPIREQF…LRDFLHNFSA (98 aa)).

It belongs to the glycerophosphoryl diester phosphodiesterase family. In terms of tissue distribution, widely expressed with high expression level in testis.

It is found in the cytoplasm. The protein resides in the membrane. Its subcellular location is the perinuclear region. The protein localises to the endoplasmic reticulum. It catalyses the reaction a 1-O-alkyl-sn-glycero-3-phosphocholine + H2O = a 1-O-alkyl-sn-glycero-3-phosphate + choline + H(+). It carries out the reaction 1-hexadecanoyl-sn-glycero-3-phosphocholine + H2O = 1-hexadecanoyl-sn-glycero-3-phosphate + choline + H(+). The catalysed reaction is N-hexadecanoyl-sn-glycero-3-phosphoethanolamine + H2O = N-hexadecanoylethanolamine + sn-glycerol 3-phosphate + H(+). The enzyme catalyses N-(5Z,8Z,11Z,14Z-eicosatetraenoyl)-1-(9Z-octadecenoyl)-sn-glycero-3-phosphoethanolamine + H2O = N-(5Z,8Z,11Z,14Z-eicosatetraenoyl)-ethanolamine + 1-(9Z-octadecenoyl)-sn-glycero-3-phosphate + H(+). It catalyses the reaction N,1-di-(9Z-octadecenoyl)-sn-glycero-3-phosphoethanolamine + H2O = N-(9Z-octadecenoyl) ethanolamine + 1-(9Z-octadecenoyl)-sn-glycero-3-phosphate + H(+). It carries out the reaction N-hexadecanoyl-1-(9Z-octadecenoyl)-sn-glycero-3-phosphoethanolamine + H2O = N-hexadecanoylethanolamine + 1-(9Z-octadecenoyl)-sn-glycero-3-phosphate + H(+). The catalysed reaction is 1-O-(1Z-octadecenyl)-sn-glycero-3-phospho-N-hexadecanoyl-ethanolamine + H2O = 1-O-(1Z-octadecenyl)-sn-glycero-3-phosphate + N-hexadecanoylethanolamine + H(+). The enzyme catalyses 1-hexadecanoyl-sn-glycero-3-phosphoethanolamine + H2O = 1-hexadecanoyl-sn-glycero-3-phosphate + ethanolamine + H(+). It catalyses the reaction 1-O-hexadecyl-sn-glycero-3-phosphocholine + H2O = 1-O-hexadecyl-sn-glycero-3-phosphate + choline + H(+). It carries out the reaction 1-(9Z-octadecenoyl)-sn-glycero-3-phosphocholine + H2O = 1-(9Z-octadecenoyl)-sn-glycero-3-phosphate + choline + H(+). The catalysed reaction is N,1-dihexadecanoyl-sn-glycero-3-phosphoethanolamine + H2O = N-hexadecanoylethanolamine + 1-hexadecanoyl-sn-glycero-3-phosphate + H(+). The enzyme catalyses 1-O-(1Z-octadecenyl)-sn-glycero-3-phospho-(N-5Z,8Z,11Z,14Z-eicosatetraenoyl)-ethanolamine + H2O = 1-O-(1Z-octadecenyl)-sn-glycero-3-phosphate + N-(5Z,8Z,11Z,14Z-eicosatetraenoyl)-ethanolamine + H(+). It catalyses the reaction 1-O-(1Z-octadecenyl)-sn-glycero-3-phospho-(N-9Z-octadecenoyl)-ethanolamine + H2O = 1-O-(1Z-octadecenyl)-sn-glycero-3-phosphate + N-(9Z-octadecenoyl) ethanolamine + H(+). Its activity is regulated as follows. Lysophospholipase D activity is increased by magnesium and manganese and inhibited by calcium in a concentration dependent manner. Loss of lysophospholipase D activity by addition of EDTA. Functionally, hydrolyzes lysoglycerophospholipids to produce lysophosphatidic acid (LPA) and the corresponding amines. Shows a preference for 1-O-alkyl-sn-glycero-3-phosphocholine (lyso-PAF), lysophosphatidylethanolamine (lyso-PE) and lysophosphatidylcholine (lyso-PC). May be involved in bioactive N-acylethanolamine biosynthesis from both N-acyl-lysoplasmenylethanolamin (N-acyl-lysoPlsEt) and N-acyl-lysophosphatidylethanolamin (N-acyl-lysoPE). In addition, hydrolyzes glycerophospho-N-acylethanolamine to N-acylethanolamine. Does not display glycerophosphodiester phosphodiesterase activity, since it cannot hydrolyze either glycerophosphoinositol or glycerophosphocholine. The protein is Lysophospholipase D GDPD1 of Homo sapiens (Human).